A 253-amino-acid chain; its full sequence is Isoprenyl transferase (253 aa).

Aspartate 32 is a catalytic residue. Residue aspartate 32 participates in Mg(2+) binding. Substrate is bound by residues 33-36 (GNGR), tryptophan 37, arginine 45, histidine 49, and 77-79 (STE). Asparagine 80 acts as the Proton acceptor in catalysis. Residues tryptophan 81, arginine 83, arginine 200, and 206–208 (RLS) each bind substrate. Glutamate 219 contacts Mg(2+).

The protein belongs to the UPP synthase family. Homodimer. The cofactor is Mg(2+).

Catalyzes the condensation of isopentenyl diphosphate (IPP) with allylic pyrophosphates generating different type of terpenoids. The sequence is that of Isoprenyl transferase from Clostridium perfringens (strain 13 / Type A).